The chain runs to 97 residues: Co-chaperonin GroES (97 aa).

Belongs to the GroES chaperonin family. Heptamer of 7 subunits arranged in a ring. Interacts with the chaperonin GroEL.

The protein localises to the cytoplasm. Together with the chaperonin GroEL, plays an essential role in assisting protein folding. The GroEL-GroES system forms a nano-cage that allows encapsulation of the non-native substrate proteins and provides a physical environment optimized to promote and accelerate protein folding. GroES binds to the apical surface of the GroEL ring, thereby capping the opening of the GroEL channel. In Photorhabdus laumondii subsp. laumondii (strain DSM 15139 / CIP 105565 / TT01) (Photorhabdus luminescens subsp. laumondii), this protein is Co-chaperonin GroES.